Consider the following 602-residue polypeptide: Aspartate--tRNA(Asp/Asn) ligase (602 aa).

L-aspartate is bound at residue E175. Residues 199–202 are aspartate; the sequence is QIFK. R221 serves as a coordination point for L-aspartate. ATP-binding positions include 221–223 and Q230; that span reads RDE. H458 provides a ligand contact to L-aspartate. Residue E492 coordinates ATP. Residue R499 participates in L-aspartate binding. 544-547 contributes to the ATP binding site; it reads GLDR.

This sequence belongs to the class-II aminoacyl-tRNA synthetase family. Type 1 subfamily. As to quaternary structure, homodimer.

It localises to the cytoplasm. The enzyme catalyses tRNA(Asx) + L-aspartate + ATP = L-aspartyl-tRNA(Asx) + AMP + diphosphate. Its function is as follows. Aspartyl-tRNA synthetase with relaxed tRNA specificity since it is able to aspartylate not only its cognate tRNA(Asp) but also tRNA(Asn). Reaction proceeds in two steps: L-aspartate is first activated by ATP to form Asp-AMP and then transferred to the acceptor end of tRNA(Asp/Asn). In Cupriavidus necator (strain ATCC 17699 / DSM 428 / KCTC 22496 / NCIMB 10442 / H16 / Stanier 337) (Ralstonia eutropha), this protein is Aspartate--tRNA(Asp/Asn) ligase.